The sequence spans 454 residues: tRNA modification GTPase MnmE (454 aa).

Arg23, Glu86, and Arg125 together coordinate (6S)-5-formyl-5,6,7,8-tetrahydrofolate. The TrmE-type G domain occupies 221–376; sequence GLTLAIVGRP…LREQILRMVS (156 aa). Asn231 contributes to the K(+) binding site. GTP-binding positions include 231–236, 250–256, and 275–278; these read NVGKSS, TAIPGTT, and DTAG. Ser235 contacts Mg(2+). Residues Thr250, Ile252, and Thr255 each contribute to the K(+) site. Position 256 (Thr256) interacts with Mg(2+). Lys454 provides a ligand contact to (6S)-5-formyl-5,6,7,8-tetrahydrofolate.

The protein belongs to the TRAFAC class TrmE-Era-EngA-EngB-Septin-like GTPase superfamily. TrmE GTPase family. In terms of assembly, homodimer. Heterotetramer of two MnmE and two MnmG subunits. The cofactor is K(+).

Its subcellular location is the cytoplasm. In terms of biological role, exhibits a very high intrinsic GTPase hydrolysis rate. Involved in the addition of a carboxymethylaminomethyl (cmnm) group at the wobble position (U34) of certain tRNAs, forming tRNA-cmnm(5)s(2)U34. The protein is tRNA modification GTPase MnmE of Koribacter versatilis (strain Ellin345).